A 645-amino-acid chain; its full sequence is Chaperone protein DnaK (645 aa).

Residue Thr-201 is modified to Phosphothreonine; by autocatalysis. A compositionally biased stretch (low complexity) spans 606–629 (NTNNATAGDNNTTDTGSSSNSDGS). Residues 606-645 (NTNNATAGDNNTTDTGSSSNSDGSKVVDSDYQEIDKKDGK) form a disordered region. Residues 630-645 (KVVDSDYQEIDKKDGK) show a composition bias toward basic and acidic residues.

This sequence belongs to the heat shock protein 70 family.

Its function is as follows. Acts as a chaperone. The polypeptide is Chaperone protein DnaK (Ehrlichia ruminantium (strain Gardel)).